Here is a 96-residue protein sequence, read N- to C-terminus: Non-specific lipid-transfer protein 2 (96 aa).

Positions 1–27 (MMRKLAVLVLAVAMVAACGGGVVGVAG) are cleaved as a signal peptide. 4 cysteine pairs are disulfide-bonded: cysteine 30–cysteine 62, cysteine 38–cysteine 52, cysteine 53–cysteine 88, and cysteine 64–cysteine 95.

Functionally, transfer lipids across membranes. May play a role in plant defense or in the biosynthesis of cuticle layers. This chain is Non-specific lipid-transfer protein 2 (LTP-2), found in Oryza sativa subsp. japonica (Rice).